The sequence spans 181 residues: Inner membrane-spanning protein YciB (181 aa).

The next 5 membrane-spanning stretches (helical) occupy residues 10-30 (LVIF…GALI), 50-70 (MHLI…VFHD), 72-92 (AFIK…LGVS), 118-138 (VTWY…YVAF), and 148-168 (FKVF…VFYL).

Belongs to the YciB family.

It localises to the cell inner membrane. Functionally, plays a role in cell envelope biogenesis, maintenance of cell envelope integrity and membrane homeostasis. The chain is Inner membrane-spanning protein YciB from Shewanella oneidensis (strain ATCC 700550 / JCM 31522 / CIP 106686 / LMG 19005 / NCIMB 14063 / MR-1).